The following is a 142-amino-acid chain: Large ribosomal subunit protein uL13 (142 aa).

The protein belongs to the universal ribosomal protein uL13 family. In terms of assembly, part of the 50S ribosomal subunit.

In terms of biological role, this protein is one of the early assembly proteins of the 50S ribosomal subunit, although it is not seen to bind rRNA by itself. It is important during the early stages of 50S assembly. This Serratia proteamaculans (strain 568) protein is Large ribosomal subunit protein uL13.